Here is a 488-residue protein sequence, read N- to C-terminus: 7,8-epoxymelianol synthase CYP88A51 (488 aa).

A helical membrane pass occupies residues 4–24 (NFLWPMLAMFLGSLVVMFGFL). Position 436 (Cys436) interacts with heme.

The protein belongs to the cytochrome P450 family. The cofactor is heme. As to expression, accumulates in mature fruits and in juice vesicles.

Its subcellular location is the membrane. It carries out the reaction melianol + reduced [NADPH--hemoprotein reductase] + O2 = 7,8-epoxymelianol + oxidized [NADPH--hemoprotein reductase] + H2O + H(+). Its pathway is secondary metabolite biosynthesis; terpenoid biosynthesis. Its function is as follows. Monooxygenase involved in the biosynthesis of limonoids triterpene natural products such as limonin, a compound with insecticidal activity responsible for the bitter taste in citrus. Catalyzes the epoxidation of melianol to produce 7,8-epoxymelianol. This Citrus sinensis (Sweet orange) protein is 7,8-epoxymelianol synthase CYP88A51.